A 412-amino-acid polypeptide reads, in one-letter code: Multifunctional CCA protein (412 aa).

Residues G8 and R11 each contribute to the ATP site. 2 residues coordinate CTP: G8 and R11. Mg(2+) contacts are provided by D21 and D23. Residues R91, R137, and R140 each contribute to the ATP site. CTP contacts are provided by R91, R137, and R140. The HD domain occupies 228–329 (TGIHTLMTLS…VKLFDSIDAW (102 aa)).

Belongs to the tRNA nucleotidyltransferase/poly(A) polymerase family. Bacterial CCA-adding enzyme type 1 subfamily. As to quaternary structure, monomer. Can also form homodimers and oligomers. It depends on Mg(2+) as a cofactor. Requires Ni(2+) as cofactor.

The catalysed reaction is a tRNA precursor + 2 CTP + ATP = a tRNA with a 3' CCA end + 3 diphosphate. The enzyme catalyses a tRNA with a 3' CCA end + 2 CTP + ATP = a tRNA with a 3' CCACCA end + 3 diphosphate. Catalyzes the addition and repair of the essential 3'-terminal CCA sequence in tRNAs without using a nucleic acid template. Adds these three nucleotides in the order of C, C, and A to the tRNA nucleotide-73, using CTP and ATP as substrates and producing inorganic pyrophosphate. tRNA 3'-terminal CCA addition is required both for tRNA processing and repair. Also involved in tRNA surveillance by mediating tandem CCA addition to generate a CCACCA at the 3' terminus of unstable tRNAs. While stable tRNAs receive only 3'-terminal CCA, unstable tRNAs are marked with CCACCA and rapidly degraded. The polypeptide is Multifunctional CCA protein (Shigella dysenteriae serotype 1 (strain Sd197)).